The primary structure comprises 75 residues: Protein B7 (75 aa).

The polypeptide is Protein B7 (B7) (Human herpesvirus 6B (strain Z29) (HHV-6 variant B)).